The following is a 621-amino-acid chain: Lethal(3)malignant brain tumor-like protein 4 (621 aa).

The interval 1–48 (MRQPNRKRKLSLESTERMNQDRCTGQTEEEKKPGEVTTPSKRESSVTT) is disordered. 2 stretches are compositionally biased toward basic and acidic residues: residues 10–20 (LSLESTERMNQ) and 28–44 (EEEKKPGEVTTPSKRES). 3 MBT repeats span residues 52–152 (WSWE…LHIP), 160–260 (FVWM…LVAP), and 269–364 (FSWT…LEVP). The CCHHC-type zinc finger occupies 370-414 (VKILPGQPACPTPGCRGIGHIRGPRYAGHHSAFGCPYSDVNLKRE). Zn(2+) contacts are provided by Cys379, Cys384, His398, and Cys404. The SAM domain maps to 543–607 (WTVDEVAEFV…YNSILMFRNS (65 aa)).

Its subcellular location is the nucleus. Putative Polycomb group (PcG) protein. PcG proteins maintain the transcriptionally repressive state of genes, probably via a modification of chromatin, rendering it heritably changed in its expressibility. The chain is Lethal(3)malignant brain tumor-like protein 4 (L3mbtl4) from Mus musculus (Mouse).